The chain runs to 369 residues: Cystathionine gamma-synthase (369 aa).

N6-(pyridoxal phosphate)lysine is present on K200.

It belongs to the trans-sulfuration enzymes family. Homotetramer. Requires pyridoxal 5'-phosphate as cofactor.

Its subcellular location is the cytoplasm. The enzyme catalyses O-succinyl-L-homoserine + L-cysteine = L,L-cystathionine + succinate + H(+). In terms of biological role, catalyzes the formation of L-cystathionine from O-succinyl-L-homoserine (OSHS) and L-cysteine, via a gamma-replacement reaction. In the absence of thiol, catalyzes gamma-elimination to form 2-oxobutanoate, succinate and ammonia. The protein is Cystathionine gamma-synthase (metB) of Haemophilus influenzae (strain ATCC 51907 / DSM 11121 / KW20 / Rd).